The following is a 287-amino-acid chain: Neuferricin homolog (287 aa).

A signal peptide spans 1–22 (MFGLLRHLFKFQFLFVVAAVLG). The 86-residue stretch at 61 to 146 (GTLFTPAELA…KPDDLIGLAG (86 aa)) folds into the Cytochrome b5 heme-binding domain. Residues 175-204 (YHHKFLELLEQARDAKRQVEELRARYPGCN) are a coiled coil.

This sequence belongs to the cytochrome b5 family. MAPR subfamily.

It is found in the secreted. Heme-binding protein. In Drosophila melanogaster (Fruit fly), this protein is Neuferricin homolog.